A 175-amino-acid polypeptide reads, in one-letter code: ATP synthase subunit b (175 aa).

A helical transmembrane segment spans residues 20-40; that stretch reads LIFWTAVTFVIVLLILKQLAW.

It belongs to the ATPase B chain family. F-type ATPases have 2 components, F(1) - the catalytic core - and F(0) - the membrane proton channel. F(1) has five subunits: alpha(3), beta(3), gamma(1), delta(1), epsilon(1). F(0) has four main subunits: a(1), b(2) and c(10-14). The alpha and beta chains form an alternating ring which encloses part of the gamma chain. F(1) is attached to F(0) by a central stalk formed by the gamma and epsilon chains, while a peripheral stalk is formed by the delta and b chains.

The protein localises to the cell inner membrane. In terms of biological role, f(1)F(0) ATP synthase produces ATP from ADP in the presence of a proton or sodium gradient. F-type ATPases consist of two structural domains, F(1) containing the extramembraneous catalytic core and F(0) containing the membrane proton channel, linked together by a central stalk and a peripheral stalk. During catalysis, ATP synthesis in the catalytic domain of F(1) is coupled via a rotary mechanism of the central stalk subunits to proton translocation. Functionally, component of the F(0) channel, it forms part of the peripheral stalk, linking F(1) to F(0). This chain is ATP synthase subunit b, found in Chlorobium limicola (strain DSM 245 / NBRC 103803 / 6330).